The sequence spans 420 residues: LanC-like protein 3 (420 aa).

The protein belongs to the LanC-like protein family.

The polypeptide is LanC-like protein 3 (LANCL3) (Homo sapiens (Human)).